We begin with the raw amino-acid sequence, 295 residues long: Pyridoxal 5'-phosphate synthase subunit PdxS (295 aa).

Aspartate 25 contacts D-ribose 5-phosphate. The Schiff-base intermediate with D-ribose 5-phosphate role is filled by lysine 82. Position 154 (glycine 154) interacts with D-ribose 5-phosphate. Residue arginine 166 participates in D-glyceraldehyde 3-phosphate binding. D-ribose 5-phosphate is bound by residues glycine 215 and 236-237 (GS).

This sequence belongs to the PdxS/SNZ family. In the presence of PdxT, forms a dodecamer of heterodimers.

The catalysed reaction is aldehydo-D-ribose 5-phosphate + D-glyceraldehyde 3-phosphate + L-glutamine = pyridoxal 5'-phosphate + L-glutamate + phosphate + 3 H2O + H(+). It functions in the pathway cofactor biosynthesis; pyridoxal 5'-phosphate biosynthesis. In terms of biological role, catalyzes the formation of pyridoxal 5'-phosphate from ribose 5-phosphate (RBP), glyceraldehyde 3-phosphate (G3P) and ammonia. The ammonia is provided by the PdxT subunit. Can also use ribulose 5-phosphate and dihydroxyacetone phosphate as substrates, resulting from enzyme-catalyzed isomerization of RBP and G3P, respectively. The polypeptide is Pyridoxal 5'-phosphate synthase subunit PdxS (Staphylococcus epidermidis (strain ATCC 35984 / DSM 28319 / BCRC 17069 / CCUG 31568 / BM 3577 / RP62A)).